The following is a 160-amino-acid chain: MKFVKIDSSSVDMKKYKLQNNVRRSIKSSSMNYANVAIMTDADHDGLGSIYPSLLGFFSNWPELFEQGRIRFVKTPVIIAQVGKKQEWFYTVAEYESAKDALPKHSIRYIKGLGSLEKSEYREMIQNPVYDVVKLPENWKELFEMLMGDNADLRKEWMSQ.

As to quaternary structure, part of the DNA topoisomerase complex made of gp39, gp52 and gp60. Requires Mg(2+) as cofactor.

The catalysed reaction is ATP-dependent breakage, passage and rejoining of double-stranded DNA.. Functionally, small subunit of the DNA topoisomerase that untwists superhelical DNA. Controls topological states of double-stranded DNA by transient breakage and subsequent rejoining of DNA strands. This Enterobacteria phage T4 (Bacteriophage T4) protein is DNA topoisomerase small subunit (60).